A 41-amino-acid chain; its full sequence is Histone H3.2 (41 aa).

The tract at residues 1–41 is disordered; it reads MARTKQTARKSTGAKAPRKQLASKAARKSAPATGGIKKPHR.

The protein belongs to the histone H3 family. The nucleosome is a histone octamer containing two molecules each of H2A, H2B, H3 and H4 assembled in one H3-H4 heterotetramer and two H2A-H2B heterodimers. The octamer wraps approximately 147 bp of DNA.

The protein localises to the nucleus. The protein resides in the chromosome. Its function is as follows. Core component of nucleosome. Nucleosomes wrap and compact DNA into chromatin, limiting DNA accessibility to the cellular machineries which require DNA as a template. Histones thereby play a central role in transcription regulation, DNA repair, DNA replication and chromosomal stability. DNA accessibility is regulated via a complex set of post-translational modifications of histones, also called histone code, and nucleosome remodeling. The chain is Histone H3.2 from Tetrahymena australis.